The chain runs to 173 residues: Ferritin heavy chain (173 aa).

A Ferritin-like diiron domain is found at 6–155 (QNFHEECERG…GYVTNLKRCG (150 aa)). Residues Glu-23, Glu-58, His-61, Glu-103, and Gln-137 each coordinate Fe cation.

It belongs to the ferritin family. As to quaternary structure, oligomer of 24 subunits. There are two types of subunits: L (light) chain and H (heavy) chain. The functional molecule is roughly spherical and contains a central cavity into which the insoluble mineral iron core is deposited.

The protein resides in the cytoplasm. The enzyme catalyses 4 Fe(2+) + O2 + 4 H(+) = 4 Fe(3+) + 2 H2O. Functionally, stores iron in a soluble, non-toxic, readily available form. Important for iron homeostasis. Has ferroxidase activity. Iron is taken up in the ferrous form and deposited as ferric hydroxides after oxidation. The polypeptide is Ferritin heavy chain (Echinococcus granulosus (Hydatid tapeworm)).